The sequence spans 222 residues: Guanylate kinase (222 aa).

One can recognise a Guanylate kinase-like domain in the interval 19–197 (GFLFILSSPS…SVSLIKSIYL (179 aa)). Position 26-33 (26-33 (SPSGAGKS)) interacts with ATP.

The protein belongs to the guanylate kinase family.

Its subcellular location is the cytoplasm. The catalysed reaction is GMP + ATP = GDP + ADP. Its function is as follows. Essential for recycling GMP and indirectly, cGMP. In Bartonella henselae (strain ATCC 49882 / DSM 28221 / CCUG 30454 / Houston 1) (Rochalimaea henselae), this protein is Guanylate kinase.